A 178-amino-acid chain; its full sequence is V-type proton ATPase subunit c''2 (178 aa).

At 1–24 the chain is on the lumenal side; that stretch reads MSGVAIHASSWGAALVRISPYTFS. Residues 25 to 45 traverse the membrane as a helical segment; that stretch reads AIGIAISIGVSVLGAAWGIYI. Residues 46–64 are Cytoplasmic-facing; sequence TGSSLIGAAIEAPRITSKN. A helical membrane pass occupies residues 65-85; sequence LISVIFCEAVAIYGVIVAIIL. The Lumenal portion of the chain corresponds to 86 to 108; sequence QTKLESVPSSKMYDAESLRAGYA. The helical transmembrane segment at 109-129 threads the bilayer; the sequence is IFASGIIVGFANLVCGLCVGI. At 130 to 147 the chain is on the cytoplasmic side; the sequence is IGSSCALSDAQNSTLFVK. Residues 148–168 form a helical membrane-spanning segment; the sequence is ILVIEIFGSALGLFGVIVGII. Over 169-178 the chain is Lumenal; sequence MSAQATWPTK.

The protein belongs to the V-ATPase proteolipid subunit family. In terms of assembly, V-ATPase is a heteromultimeric enzyme composed of a peripheral catalytic V1 complex (components A to H) attached to an integral membrane V0 proton pore complex (components: a, c, c'', d and e). The proteolipid components c and c'' are present as a hexameric ring that forms the proton-conducting pore. Interacts with APD2.

It is found in the endoplasmic reticulum membrane. It localises to the golgi apparatus membrane. Its function is as follows. Proton-conducting pore forming subunit of the membrane integral V0 complex of vacuolar ATPase. V-ATPase is responsible for acidifying a variety of intracellular compartments in eukaryotic cells. This is V-type proton ATPase subunit c''2 (VHA-c''2) from Arabidopsis thaliana (Mouse-ear cress).